We begin with the raw amino-acid sequence, 81 residues long: ATP synthase subunit c, chloroplastic (81 aa).

2 helical membrane-spanning segments follow: residues 3-23 (AIVSAASVIAAGLAVGLAAIG) and 57-77 (LAFMESLTIYGLVVALSLLFA).

The protein belongs to the ATPase C chain family. As to quaternary structure, F-type ATPases have 2 components, F(1) - the catalytic core - and F(0) - the membrane proton channel. F(1) has five subunits: alpha(3), beta(3), gamma(1), delta(1), epsilon(1). F(0) has four main subunits: a(1), b(1), b'(1) and c(10-14). The alpha and beta chains form an alternating ring which encloses part of the gamma chain. F(1) is attached to F(0) by a central stalk formed by the gamma and epsilon chains, while a peripheral stalk is formed by the delta, b and b' chains.

It localises to the plastid. The protein localises to the chloroplast thylakoid membrane. F(1)F(0) ATP synthase produces ATP from ADP in the presence of a proton or sodium gradient. F-type ATPases consist of two structural domains, F(1) containing the extramembraneous catalytic core and F(0) containing the membrane proton channel, linked together by a central stalk and a peripheral stalk. During catalysis, ATP synthesis in the catalytic domain of F(1) is coupled via a rotary mechanism of the central stalk subunits to proton translocation. Functionally, key component of the F(0) channel; it plays a direct role in translocation across the membrane. A homomeric c-ring of between 10-14 subunits forms the central stalk rotor element with the F(1) delta and epsilon subunits. The protein is ATP synthase subunit c, chloroplastic of Cyanidioschyzon merolae (strain NIES-3377 / 10D) (Unicellular red alga).